Here is a 158-residue protein sequence, read N- to C-terminus: 6,7-dimethyl-8-ribityllumazine synthase (158 aa).

Residues F23, 61–63 (SFE), and 85–87 (AVI) each bind 5-amino-6-(D-ribitylamino)uracil. Residue 90-91 (ET) participates in (2S)-2-hydroxy-3-oxobutyl phosphate binding. Catalysis depends on H93, which acts as the Proton donor. A 5-amino-6-(D-ribitylamino)uracil-binding site is contributed by F118. A (2S)-2-hydroxy-3-oxobutyl phosphate-binding site is contributed by R132.

The protein belongs to the DMRL synthase family.

It catalyses the reaction (2S)-2-hydroxy-3-oxobutyl phosphate + 5-amino-6-(D-ribitylamino)uracil = 6,7-dimethyl-8-(1-D-ribityl)lumazine + phosphate + 2 H2O + H(+). It participates in cofactor biosynthesis; riboflavin biosynthesis; riboflavin from 2-hydroxy-3-oxobutyl phosphate and 5-amino-6-(D-ribitylamino)uracil: step 1/2. Functionally, catalyzes the formation of 6,7-dimethyl-8-ribityllumazine by condensation of 5-amino-6-(D-ribitylamino)uracil with 3,4-dihydroxy-2-butanone 4-phosphate. This is the penultimate step in the biosynthesis of riboflavin. The polypeptide is 6,7-dimethyl-8-ribityllumazine synthase (Prochlorococcus marinus (strain MIT 9301)).